A 188-amino-acid polypeptide reads, in one-letter code: Zinc finger protein 428 (188 aa).

Positions 1–162 are disordered; that stretch reads MTETREPAET…EEEEEEGTYH (162 aa). Residues 40-61 show a composition bias toward acidic residues; that stretch reads PDSEEEEDEEEEEEETTDDPEY. Over residues 84–94 the composition is skewed to low complexity; the sequence is RAAQPPAQPCQ. Residue threonine 108 is modified to Phosphothreonine. Residues 116–129 show a composition bias toward low complexity; that stretch reads PATAPQEAPAPEGR. A compositionally biased stretch (basic and acidic residues) spans 138 to 149; the sequence is PPRAGEGRPAGR. The segment at 161 to 183 adopts a C2H2-type zinc-finger fold; sequence YHCTECEDSFDNLGELHGHFMLH.

The protein is Zinc finger protein 428 (ZNF428) of Homo sapiens (Human).